We begin with the raw amino-acid sequence, 827 residues long: Probable inorganic carbon transporter subunit DabA2 (827 aa).

Zn(2+)-binding residues include Cys-351, Asp-353, His-524, and Cys-539.

Belongs to the inorganic carbon transporter (TC 9.A.2) DabA family. In terms of assembly, forms a complex with DabB2, possibly a heterodimer. Zn(2+) serves as cofactor.

Its subcellular location is the cell inner membrane. Its activity is regulated as follows. Uptake of inorganic carbon by cells in the presence of thiosulphate is fully inhibited by the uncouplers carbonyl cyanide m-chlorophenyl hydrazone (CCCP), carbonyl cyanide p-trifluoromethoxyphenyl hydrazone (FCCP), S13 or SF6847. Not inhibited by the ATPase inhibitor N,N-dicyclohexylcarbodiimide (DCCD). Inorganic carbon uptake is inhibited by the ionophore CCCP, suggesting uptake is coupled to a cation gradient. In terms of biological role, part of an energy-coupled inorganic carbon pump; its substrate may be carbon dioxide. Expression of both dabA2 and dabB2 (DAB2) restores growth in ambient air to E.coli deleted of its carbonic anhydrase genes (called CAfree, deletion of 'can' and 'cynT'); neither dabA2 or dabB2 alone is sufficient. Rescue is pH-independent, suggesting it transports CO(2) and not carbonate ions. Together the genes allow greater than normal uptake of inorganic carbon by E.coli. Uptake of carbon dioxide rather than bicarbonate has been suggested based on kinetic calculations. The polypeptide is Probable inorganic carbon transporter subunit DabA2 (Halothiobacillus neapolitanus (strain ATCC 23641 / c2) (Thiobacillus neapolitanus)).